A 520-amino-acid polypeptide reads, in one-letter code: Acetylcholine receptor subunit delta (520 aa).

A signal peptide spans Met1–Gly24. Topologically, residues Leu25–Lys248 are extracellular. N-linked (GlcNAc...) asparagine glycosylation is found at Asn100, Asn167, and Asn193. Residues Cys154 and Cys168 are joined by a disulfide bond. 3 consecutive transmembrane segments (helical) span residues Pro249 to Leu273, Thr281 to Ser299, and Phe315 to Ile336. Residues His337–Arg474 lie on the Cytoplasmic side of the membrane. The residue at position 393 (Tyr393) is a Phosphotyrosine; by Tyr-kinases. Residues Leu475–Leu493 form a helical membrane-spanning segment.

The protein belongs to the ligand-gated ion channel (TC 1.A.9) family. Acetylcholine receptor (TC 1.A.9.1) subfamily. Delta/CHRND sub-subfamily. As to quaternary structure, pentamer of two alpha chains, and one each of the beta, delta, and gamma (in immature muscle) or epsilon (in mature muscle) chains. The muscle heteropentamer composed of alpha-1, beta-1, delta, epsilon subunits interacts with the alpha-conotoxin ImII.

It localises to the postsynaptic cell membrane. Its subcellular location is the cell membrane. It catalyses the reaction K(+)(in) = K(+)(out). It carries out the reaction Na(+)(in) = Na(+)(out). In terms of biological role, after binding acetylcholine, the AChR responds by an extensive change in conformation that affects all subunits and leads to opening of an ion-conducting channel across the plasma membrane. The chain is Acetylcholine receptor subunit delta (Chrnd) from Mus musculus (Mouse).